The chain runs to 89 residues: Small ribosomal subunit protein uS15 (89 aa).

The protein belongs to the universal ribosomal protein uS15 family. As to quaternary structure, part of the 30S ribosomal subunit. Forms a bridge to the 50S subunit in the 70S ribosome, contacting the 23S rRNA.

Its function is as follows. One of the primary rRNA binding proteins, it binds directly to 16S rRNA where it helps nucleate assembly of the platform of the 30S subunit by binding and bridging several RNA helices of the 16S rRNA. In terms of biological role, forms an intersubunit bridge (bridge B4) with the 23S rRNA of the 50S subunit in the ribosome. The polypeptide is Small ribosomal subunit protein uS15 (Parafrankia sp. (strain EAN1pec)).